The following is a 73-amino-acid chain: Protein DSS1 HOMOLOG ON CHROMOSOME V (73 aa).

It belongs to the DSS1/SEM1 family. Part of the 26S proteasome. Interacts with BRCA2B. Interacts with EER5. Interacts with UCH1 and UCH2.

In terms of biological role, subunit of the 26S proteasome which plays a role in ubiquitin-dependent proteolysis. Also associates with the TREX-2 complex that is required for transcription-coupled mRNA export. This chain is Protein DSS1 HOMOLOG ON CHROMOSOME V, found in Arabidopsis thaliana (Mouse-ear cress).